We begin with the raw amino-acid sequence, 592 residues long: Ichor (592 aa).

Residues 114–123 (NNNYMQSAYH) show a composition bias toward polar residues. Disordered regions lie at residues 114 to 156 (NNNY…VSSS), 343 to 377 (LQNR…QAPT), 416 to 439 (LSNP…MQAS), and 459 to 527 (HTTT…DLSG). The span at 124–148 (PQNQSNPTSTTQSNGGSNSNSNNSN) shows a compositional bias: low complexity. Residues 356 to 369 (SSGGGGGANQGAGI) show a composition bias toward gly residues. Residues 459–469 (HTTTASTTGSE) are compositionally biased toward polar residues. Over residues 488–500 (QQQQQQQQQQQQQ) the composition is skewed to low complexity. Polar residues predominate over residues 507–524 (PTTPQMSAISPSGFSASD). 2 consecutive C2H2-type zinc fingers follow at residues 536–558 (HRCS…LRTH) and 564–586 (FRCD…QQIH).

The protein localises to the nucleus. Functionally, transcriptional activator. In tracheal terminal cells, regulates the transcription of factors involved in the formation of a mature apical extracellular matrix (aECM) which is essential for the integrity and shape of seamless tubes. The chain is Ichor from Drosophila melanogaster (Fruit fly).